The primary structure comprises 203 residues: Outer-membrane lipoprotein carrier protein (203 aa).

The signal sequence occupies residues 1-19 (MKKSIVVLFSAVLPFAVFA).

This sequence belongs to the LolA family. Monomer.

The protein resides in the periplasm. Functionally, participates in the translocation of lipoproteins from the inner membrane to the outer membrane. Only forms a complex with a lipoprotein if the residue after the N-terminal Cys is not an aspartate (The Asp acts as a targeting signal to indicate that the lipoprotein should stay in the inner membrane). The polypeptide is Outer-membrane lipoprotein carrier protein (Shewanella amazonensis (strain ATCC BAA-1098 / SB2B)).